Reading from the N-terminus, the 535-residue chain is Putative subtilisin-like proteinase 2 (535 aa).

An N-terminal signal peptide occupies residues 1–17; it reads MFFVGVAVLAALQSVWG. The region spanning 221 to 475 is the Peptidase S8 domain; sequence NWIFRVLQIK…IPRLGCKGRI (255 aa). Active-site charge relay system residues include Asp255 and His277. Cys369 and Cys400 form a disulfide bridge. Residue Ser420 is the Charge relay system of the active site. A helical membrane pass occupies residues 489 to 509; that stretch reads IVPLVFVVLITSALLYLLLIG.

The protein belongs to the peptidase S8 family.

The protein resides in the membrane. May be involved in the degradation of proteins for nutrient acquisition or possess a regulatory function by proteolytic activation of proproteins. The sequence is that of Putative subtilisin-like proteinase 2 (SPL2) from Encephalitozoon cuniculi (strain GB-M1) (Microsporidian parasite).